Here is a 727-residue protein sequence, read N- to C-terminus: Phenylalanine ammonia-lyase str11 (727 aa).

Residue Tyr105 is the Proton donor/acceptor of the active site. The 5-imidazolinone (Ala-Gly) cross-link spans 210 to 212 (ASG). Ser211 carries the 2,3-didehydroalanine (Ser) modification. The (E)-cinnamate site is built by Asn271, Gln361, Arg367, Asn397, Lys468, Glu496, and Asn499.

Belongs to the PAL/histidase family. Post-translationally, contains an active site 4-methylidene-imidazol-5-one (MIO), which is formed autocatalytically by cyclization and dehydration of residues Ala-Ser-Gly.

It carries out the reaction L-phenylalanine = (E)-cinnamate + NH4(+). It functions in the pathway mycotoxin biosynthesis. Functionally, phenylalanine ammonia-lyase; part of the gene cluster that mediates the biosynthesis of strobilurin A, an antifungal polyketide that contains a key beta-methoxyacrylate toxophore that targets the complex III of the mitochondrial electron transport chain. Strobilurin biosynthesis begins with construction of benzoyl CoA by step-wise elimination of ammonia from phenylalanine by the phenylalanine ammonia-lyase str11, oxygenation by str8 and retro-Claisen reaction to form benzoic acid, which is activated to its CoA thiolester benzoyl CoA by the dedicated CoA ligase str10. Benzoyl CoA forms the starter unit for the highly reducing polyketide synthase stpks1 that produces the polyketide prestrobilutin A. The FAD-dependent oxygenase str9 then catalyzes the key oxidative rearrangement responsible for the creation of the beta-methoxyacrylate toxophore. Str9 performs epoxidation of the 2,3 olefin of prestrobilutin A, followed by Meinwald rearrangement to furnish the aldehyde intermediate. Rapid enolization of the aldehyde intermediate would give the beta-methoxyacrylate skeleton and methylations catalyzed by str2 and str3 complete the synthesis and lead to the production of strobilurin A. The short-chain dehydrogenase stl2 and the dehydrogenase str4 play a role in the shunt pathway leading to the production of bolineol. The cluster encodes no obvious halogenase gene that could be involved in production of strobilurin B, nor any obvious dimethylallyl-transferase that could be involved in the production of strobilurin G. It is possible that unknown proteins encoded in, or near, the cluster (such as str1 or stl1) may form new classes of halogenases or dimethylally-transferases, or that the responsible genes are located elsewhere on the genome. Similarly, proteins encoded by str5/str6 hydrolases appear to have no chemical role in the biosynthesis of strobilurin A. Finally, no obvious self-resistance gene is found within the cluster. In Strobilurus tenacellus, this protein is Phenylalanine ammonia-lyase str11.